Reading from the N-terminus, the 239-residue chain is Ribonuclease 3 (239 aa).

An RNase III domain is found at Arg-12–Gly-137. Position 50 (Glu-50) interacts with Mg(2+). Asp-54 is an active-site residue. 2 residues coordinate Mg(2+): Asp-123 and Glu-126. Glu-126 is an active-site residue. The region spanning Asp-162–Val-231 is the DRBM domain.

Belongs to the ribonuclease III family. Homodimer. Mg(2+) is required as a cofactor.

It localises to the cytoplasm. The enzyme catalyses Endonucleolytic cleavage to 5'-phosphomonoester.. Its function is as follows. Digests double-stranded RNA. Involved in the processing of primary rRNA transcript to yield the immediate precursors to the large and small rRNAs (23S and 16S). Processes some mRNAs, and tRNAs when they are encoded in the rRNA operon. Processes pre-crRNA and tracrRNA of type II CRISPR loci if present in the organism. This is Ribonuclease 3 from Sinorhizobium fredii (strain NBRC 101917 / NGR234).